The primary structure comprises 474 residues: Phosphomannomutase (474 aa).

Residue Ser-101 is the Phosphoserine intermediate of the active site. 4 residues coordinate Mg(2+): Ser-101, Asp-242, Asp-244, and Asp-246.

The protein belongs to the phosphohexose mutase family. It depends on Mg(2+) as a cofactor.

The enzyme catalyses alpha-D-mannose 1-phosphate = D-mannose 6-phosphate. The chain is Phosphomannomutase (noeK) from Sinorhizobium fredii (strain NBRC 101917 / NGR234).